The following is a 322-amino-acid chain: Replication factor C small subunit (322 aa).

46–53 contributes to the ATP binding site; sequence GSAGVGKT.

The protein belongs to the activator 1 small subunits family. RfcS subfamily. As to quaternary structure, heteromultimer composed of small subunits (RfcS) and large subunits (RfcL).

In terms of biological role, part of the RFC clamp loader complex which loads the PCNA sliding clamp onto DNA. The sequence is that of Replication factor C small subunit from Methanoregula boonei (strain DSM 21154 / JCM 14090 / 6A8).